A 231-amino-acid polypeptide reads, in one-letter code: Small ribosomal subunit protein uS3 (231 aa).

The KH type-2 domain occupies 39 to 107 (VREFLKEKLK…PAQINIAEVR (69 aa)).

It belongs to the universal ribosomal protein uS3 family. Part of the 30S ribosomal subunit. Forms a tight complex with proteins S10 and S14.

Its function is as follows. Binds the lower part of the 30S subunit head. Binds mRNA in the 70S ribosome, positioning it for translation. The sequence is that of Small ribosomal subunit protein uS3 from Colwellia psychrerythraea (strain 34H / ATCC BAA-681) (Vibrio psychroerythus).